A 502-amino-acid polypeptide reads, in one-letter code: uncharacterized protein (502 aa).

Residues 1 to 21 traverse the membrane as a helical segment; sequence MKIFLVFLSVFFFNGCFGLVY. PLD phosphodiesterase domains are found at residues 162-189 and 396-423; these read IKKR…GDNY and TKHS…DPRS.

This sequence belongs to the phospholipase D family. Cardiolipin synthase subfamily.

It is found in the cell membrane. This is an uncharacterized protein from Helicobacter pylori (strain ATCC 700392 / 26695) (Campylobacter pylori).